Consider the following 501-residue polypeptide: Iroquois-class homeodomain protein IRX-3 (501 aa).

Residues 125–188 constitute a DNA-binding region (homeobox; TALE-type); it reads FGDPSRPKNA…ANARRRLKKE (64 aa). The tract at residues 190–381 is disordered; that stretch reads KMTWAPRSRT…SPPGAAVAPS (192 aa). 2 stretches are compositionally biased toward acidic residues: residues 210–220 and 227–258; these read REEEDEEEDEE and ELEE…DLEN. 2 positions are modified to phosphoserine: serine 323 and serine 326. The segment covering 324-339 has biased composition (pro residues); it reads LPSPPVSLDPCAPAPA.

Belongs to the TALE/IRO homeobox family.

The protein resides in the nucleus. Functionally, transcription factor involved in SHH-dependent neural patterning. Together with NKX2-2 and NKX6-1 acts to restrict the generation of motor neurons to the appropriate region of the neural tube. Belongs to the class I proteins of neuronal progenitor factors, which are repressed by SHH signals. Involved in the transcriptional repression of MNX1 in non-motor neuron cells. Acts as a regulator of energy metabolism. This chain is Iroquois-class homeodomain protein IRX-3 (IRX3), found in Homo sapiens (Human).